The chain runs to 253 residues: MRKKRLLSRISFSSLFLLCGTVLSAYTGIQADLRNLIKETTKKDIDVYKAIKTTEGKKNIITSLKKSYEVNPKDTTKLLLDAWKQSFEKGELGIPDLDFEDVIYPKTSEPFKFERKVDHFQMTYQSFKDLSIEAKLSYNFNWFGDYSLGGFTAKKGDKHYFDLFLKIKSNSDPKKQFTTEKFLTKEEKNKVNGKEITRNLEWIEFSASLSWLIKGKDDVSQKSVKQFLSSYANNTSGYSRDINLFIYLEYLIK.

The protein belongs to the MG439/MG440 family.

This is an uncharacterized protein from Mycoplasma pneumoniae (strain ATCC 29342 / M129 / Subtype 1) (Mycoplasmoides pneumoniae).